We begin with the raw amino-acid sequence, 270 residues long: 5-deoxy-glucuronate isomerase (270 aa).

Belongs to the isomerase IolB family.

It carries out the reaction 5-deoxy-D-glucuronate = 5-dehydro-2-deoxy-D-gluconate. Its pathway is polyol metabolism; myo-inositol degradation into acetyl-CoA; acetyl-CoA from myo-inositol: step 4/7. Functionally, involved in the isomerization of 5-deoxy-glucuronate (5DG) to 5-dehydro-2-deoxy-D-gluconate (DKG or 2-deoxy-5-keto-D-gluconate). The sequence is that of 5-deoxy-glucuronate isomerase from Halalkalibacterium halodurans (strain ATCC BAA-125 / DSM 18197 / FERM 7344 / JCM 9153 / C-125) (Bacillus halodurans).